A 262-amino-acid polypeptide reads, in one-letter code: uncharacterized protein (262 aa).

Residues 1–22 (MMNNSITLLLALLVGLVGFAFT) form the signal peptide.

It belongs to the IIV-6 117L family.

This is an uncharacterized protein from Aedes vexans (Inland floodwater mosquito).